Consider the following 1179-residue polypeptide: ATP-dependent helicase/deoxyribonuclease subunit B (1179 aa).

This sequence belongs to the helicase family. AddB/RexB type 2 subfamily. In terms of assembly, heterodimer of AddA and RexB. Mg(2+) is required as a cofactor.

Functionally, the heterodimer acts as both an ATP-dependent DNA helicase and an ATP-dependent, dual-direction single-stranded exonuclease. Recognizes the chi site generating a DNA molecule suitable for the initiation of homologous recombination. This subunit has 5' -&gt; 3' nuclease activity but not helicase activity. In Lactobacillus delbrueckii subsp. bulgaricus (strain ATCC 11842 / DSM 20081 / BCRC 10696 / JCM 1002 / NBRC 13953 / NCIMB 11778 / NCTC 12712 / WDCM 00102 / Lb 14), this protein is ATP-dependent helicase/deoxyribonuclease subunit B.